Reading from the N-terminus, the 274-residue chain is DNA damage-inducible protein D (274 aa).

The protein is DNA damage-inducible protein D (dinD) of Escherichia coli (strain K12).